Consider the following 140-residue polypeptide: Methylglyoxal synthase (140 aa).

One can recognise an MGS-like domain in the interval 1-140 (MKIALIAHDK…RGRKGEINGL (140 aa)). Residues His-8, Lys-12, 34-37 (TGTT), and 54-55 (SG) contribute to the substrate site. Catalysis depends on Asp-60, which acts as the Proton donor/acceptor. Residue His-87 participates in substrate binding.

The protein belongs to the methylglyoxal synthase family.

The catalysed reaction is dihydroxyacetone phosphate = methylglyoxal + phosphate. Functionally, catalyzes the formation of methylglyoxal from dihydroxyacetone phosphate. This is Methylglyoxal synthase from Geobacillus sp. (strain WCH70).